Here is a 155-residue protein sequence, read N- to C-terminus: Ribosomal RNA large subunit methyltransferase H (155 aa).

Residues leucine 72, glycine 103, and 122 to 127 each bind S-adenosyl-L-methionine; that span reads LSPLTL.

The protein belongs to the RNA methyltransferase RlmH family. In terms of assembly, homodimer.

It is found in the cytoplasm. The catalysed reaction is pseudouridine(1915) in 23S rRNA + S-adenosyl-L-methionine = N(3)-methylpseudouridine(1915) in 23S rRNA + S-adenosyl-L-homocysteine + H(+). Functionally, specifically methylates the pseudouridine at position 1915 (m3Psi1915) in 23S rRNA. This is Ribosomal RNA large subunit methyltransferase H from Haemophilus influenzae (strain PittEE).